The sequence spans 473 residues: Photosystem II CP43 reaction center protein (473 aa).

The propeptide occupies 1–14; it reads MKTLYSLRRFYPVE. At Thr-15 the chain carries N-acetylthreonine. Thr-15 carries the post-translational modification Phosphothreonine. Transmembrane regions (helical) follow at residues 69–93, 134–155, 178–200, 255–275, and 291–312; these read LFEV…PHLA, LLGP…KDRN, KALY…RKIT, KPFA…LSYS, and WFNN…ASQA. Residue Glu-367 coordinates [CaMn4O5] cluster. A helical transmembrane segment spans residues 447 to 471; the sequence is RARAAAAGFEKGIDRDFEPVLSMTP.

The protein belongs to the PsbB/PsbC family. PsbC subfamily. In terms of assembly, PSII is composed of 1 copy each of membrane proteins PsbA, PsbB, PsbC, PsbD, PsbE, PsbF, PsbH, PsbI, PsbJ, PsbK, PsbL, PsbM, PsbT, PsbX, PsbY, PsbZ, Psb30/Ycf12, at least 3 peripheral proteins of the oxygen-evolving complex and a large number of cofactors. It forms dimeric complexes. Binds multiple chlorophylls and provides some of the ligands for the Ca-4Mn-5O cluster of the oxygen-evolving complex. It may also provide a ligand for a Cl- that is required for oxygen evolution. PSII binds additional chlorophylls, carotenoids and specific lipids. serves as cofactor.

Its subcellular location is the plastid. The protein resides in the chloroplast thylakoid membrane. In terms of biological role, one of the components of the core complex of photosystem II (PSII). It binds chlorophyll and helps catalyze the primary light-induced photochemical processes of PSII. PSII is a light-driven water:plastoquinone oxidoreductase, using light energy to abstract electrons from H(2)O, generating O(2) and a proton gradient subsequently used for ATP formation. The protein is Photosystem II CP43 reaction center protein of Liriodendron tulipifera (Tuliptree).